The chain runs to 118 residues: Immunoglobulin heavy variable 3-9 (118 aa).

A signal peptide spans 1–19 (MELGLSWIFLLAILKGVQC). The framework-1 stretch occupies residues 20-44 (EVQLVESGGGLVQPGRSLRLSCAAS). The Ig-like domain maps to 20 to 118 (EVQLVESGGG…DTALYYCAKD (99 aa)). A disulfide bridge connects residues Cys41 and Cys115. A complementarity-determining-1 region spans residues 45–52 (GFTFDDYA). Residues 53–69 (MHWVRQAPGKGLEWVSG) form a framework-2 region. Residues 70-77 (ISWNSGSI) form a complementarity-determining-2 region. The segment at 78-115 (GYADSVKGRFTISRDNAKNSLYLQMNSLRAEDTALYYC) is framework-3. The segment at 116–118 (AKD) is complementarity-determining-3.

As to quaternary structure, immunoglobulins are composed of two identical heavy chains and two identical light chains; disulfide-linked.

The protein resides in the secreted. It localises to the cell membrane. Functionally, v region of the variable domain of immunoglobulin heavy chains that participates in the antigen recognition. Immunoglobulins, also known as antibodies, are membrane-bound or secreted glycoproteins produced by B lymphocytes. In the recognition phase of humoral immunity, the membrane-bound immunoglobulins serve as receptors which, upon binding of a specific antigen, trigger the clonal expansion and differentiation of B lymphocytes into immunoglobulins-secreting plasma cells. Secreted immunoglobulins mediate the effector phase of humoral immunity, which results in the elimination of bound antigens. The antigen binding site is formed by the variable domain of one heavy chain, together with that of its associated light chain. Thus, each immunoglobulin has two antigen binding sites with remarkable affinity for a particular antigen. The variable domains are assembled by a process called V-(D)-J rearrangement and can then be subjected to somatic hypermutations which, after exposure to antigen and selection, allow affinity maturation for a particular antigen. The polypeptide is Immunoglobulin heavy variable 3-9 (Homo sapiens (Human)).